Reading from the N-terminus, the 476-residue chain is Probable cytosolic Fe-S cluster assembly factor GJ13047 (476 aa).

Residues cysteine 23, cysteine 68, cysteine 71, cysteine 74, cysteine 187, cysteine 243, cysteine 395, and cysteine 399 each contribute to the [4Fe-4S] cluster site.

This sequence belongs to the NARF family.

Component of the cytosolic iron-sulfur (Fe/S) protein assembly machinery. Required for maturation of extramitochondrial Fe/S proteins. In Drosophila virilis (Fruit fly), this protein is Probable cytosolic Fe-S cluster assembly factor GJ13047.